Reading from the N-terminus, the 293-residue chain is Formamidopyrimidine-DNA glycosylase (293 aa).

Catalysis depends on P2, which acts as the Schiff-base intermediate with DNA. E3 acts as the Proton donor in catalysis. K58 serves as the catalytic Proton donor; for beta-elimination activity. DNA is bound by residues H104, R123, and K166. The FPG-type zinc finger occupies 257 to 293 (QVYDREGEPCRTDGCGGVVKRFVQNGRSTFWCPKCQR). The active-site Proton donor; for delta-elimination activity is R283.

It belongs to the FPG family. In terms of assembly, monomer. It depends on Zn(2+) as a cofactor.

The enzyme catalyses Hydrolysis of DNA containing ring-opened 7-methylguanine residues, releasing 2,6-diamino-4-hydroxy-5-(N-methyl)formamidopyrimidine.. It catalyses the reaction 2'-deoxyribonucleotide-(2'-deoxyribose 5'-phosphate)-2'-deoxyribonucleotide-DNA = a 3'-end 2'-deoxyribonucleotide-(2,3-dehydro-2,3-deoxyribose 5'-phosphate)-DNA + a 5'-end 5'-phospho-2'-deoxyribonucleoside-DNA + H(+). Involved in base excision repair of DNA damaged by oxidation or by mutagenic agents. Acts as a DNA glycosylase that recognizes and removes damaged bases. Has a preference for oxidized purines, such as 7,8-dihydro-8-oxoguanine (8-oxoG). Has AP (apurinic/apyrimidinic) lyase activity and introduces nicks in the DNA strand. Cleaves the DNA backbone by beta-delta elimination to generate a single-strand break at the site of the removed base with both 3'- and 5'-phosphates. The protein is Formamidopyrimidine-DNA glycosylase of Bradyrhizobium sp. (strain BTAi1 / ATCC BAA-1182).